A 471-amino-acid chain; its full sequence is Trigger factor (471 aa).

Residues 169 to 264 (GDVAVVDFKG…LKEIKEKELP (96 aa)) enclose the PPIase FKBP-type domain. The disordered stretch occupies residues 443–471 (SLASQESEITAPETEAETIEVTAESTTGE). The span at 448-471 (ESEITAPETEAETIEVTAESTTGE) shows a compositional bias: low complexity.

This sequence belongs to the FKBP-type PPIase family. Tig subfamily.

It is found in the cytoplasm. It catalyses the reaction [protein]-peptidylproline (omega=180) = [protein]-peptidylproline (omega=0). Its function is as follows. Involved in protein export. Acts as a chaperone by maintaining the newly synthesized protein in an open conformation. Functions as a peptidyl-prolyl cis-trans isomerase. This Trichormus variabilis (strain ATCC 29413 / PCC 7937) (Anabaena variabilis) protein is Trigger factor.